The chain runs to 87 residues: Diazepam-binding inhibitor-like 5 (87 aa).

The ACB domain maps to 2–87 (SQVEFEMACA…VEELKKKEPC (86 aa)). An acyl-CoA-binding positions include 29–33 (YSFYK), Lys55, and Tyr74.

It belongs to the ACBP family. As to expression, exclusively expressed in late spermatids and spermatozoa. Not found in epididymis, spleen, bone marrow, skin, liver, brain, heart, kidney, muscle.

Its subcellular location is the cytoplasm. May be involved in the energy metabolism of the mature sperm. The chain is Diazepam-binding inhibitor-like 5 (Dbil5) from Mus musculus (Mouse).